The sequence spans 311 residues: Methionyl-tRNA formyltransferase (311 aa).

(6S)-5,6,7,8-tetrahydrofolate is bound at residue 109–112 (SLLP).

This sequence belongs to the Fmt family.

The catalysed reaction is L-methionyl-tRNA(fMet) + (6R)-10-formyltetrahydrofolate = N-formyl-L-methionyl-tRNA(fMet) + (6S)-5,6,7,8-tetrahydrofolate + H(+). Its function is as follows. Attaches a formyl group to the free amino group of methionyl-tRNA(fMet). The formyl group appears to play a dual role in the initiator identity of N-formylmethionyl-tRNA by promoting its recognition by IF2 and preventing the misappropriation of this tRNA by the elongation apparatus. The polypeptide is Methionyl-tRNA formyltransferase (Acetivibrio thermocellus (strain ATCC 27405 / DSM 1237 / JCM 9322 / NBRC 103400 / NCIMB 10682 / NRRL B-4536 / VPI 7372) (Clostridium thermocellum)).